Reading from the N-terminus, the 204-residue chain is High frequency lysogenization protein HflD homolog (204 aa).

The protein belongs to the HflD family.

The protein resides in the cytoplasm. The protein localises to the cell inner membrane. In Shewanella sediminis (strain HAW-EB3), this protein is High frequency lysogenization protein HflD homolog.